The following is a 207-amino-acid chain: Ribonuclease HII (207 aa).

An RNase H type-2 domain is found at 12–201; it reads DLVAGVDEVG…VRAAWEAREG (190 aa). A divalent metal cation-binding residues include Asp18, Glu19, and Asp110.

Belongs to the RNase HII family. The cofactor is Mn(2+). Mg(2+) serves as cofactor.

The protein resides in the cytoplasm. It catalyses the reaction Endonucleolytic cleavage to 5'-phosphomonoester.. Its function is as follows. Endonuclease that specifically degrades the RNA of RNA-DNA hybrids. This is Ribonuclease HII from Pseudomonas putida (strain ATCC 47054 / DSM 6125 / CFBP 8728 / NCIMB 11950 / KT2440).